The sequence spans 209 residues: Kynurenine formamidase (209 aa).

Trp20 is a binding site for substrate. The Zn(2+) site is built by His50, His54, and Asp56. His60 acts as the Proton donor/acceptor in catalysis. Residues His161 and Glu173 each contribute to the Zn(2+) site.

Belongs to the Cyclase 1 superfamily. KynB family. As to quaternary structure, homodimer. Zn(2+) serves as cofactor.

It catalyses the reaction N-formyl-L-kynurenine + H2O = L-kynurenine + formate + H(+). It participates in amino-acid degradation; L-tryptophan degradation via kynurenine pathway; L-kynurenine from L-tryptophan: step 2/2. Catalyzes the hydrolysis of N-formyl-L-kynurenine to L-kynurenine, the second step in the kynurenine pathway of tryptophan degradation. This is Kynurenine formamidase from Bacillus anthracis.